A 336-amino-acid chain; its full sequence is TBC1 domain family member 21 (336 aa).

One can recognise a Rab-GAP TBC domain in the interval glycine 57–lysine 265.

Interacts with ACTB. Interacts with ARMC12, TOMM20, DNAH7 and RAP1A. Interacts with RAB10. As to expression, expressed in round and elongated spermatids (at protein level). Expressed specifically in adult testis and very weakly in fetal brain.

It localises to the cytoplasmic vesicle. The protein resides in the secretory vesicle. Its subcellular location is the acrosome. It is found in the cytoplasm. The protein localises to the cytoskeleton. Functionally, acts as a GTPase-activating protein for Rab family protein(s). Essential for the establishment of male fertility, and is required for both the production of normal sperm number and sperm function. Plays an important role in the formation of intact mitochondria, outer dense fibers and axoneme within the sperm tail. Essential for sperm mitochondrial sheath formation and for the interactions of ARMC12 with VDAC2 and VDAC3. May be involved in acrosome formation and cytoskeletal reorganization during spermiogenesis, possibly by regulating RAB3A activity. The sequence is that of TBC1 domain family member 21 (TBC1D21) from Homo sapiens (Human).